Consider the following 1259-residue polypeptide: Telomerase reverse transcriptase (1259 aa).

A Reverse transcriptase domain is found at 742 to 1067 (RGEPRKAVRH…SFMPWSGLLI (326 aa)). 3 residues coordinate Mg(2+): Asp837, Asp999, and Asp1000.

The protein belongs to the reverse transcriptase family. Telomerase subfamily. Component of the telomerase ribonucleoprotein complex. As to expression, expressed in shoot apices and immature embryos.

It localises to the nucleus. Its subcellular location is the chromosome. It is found in the telomere. The catalysed reaction is DNA(n) + a 2'-deoxyribonucleoside 5'-triphosphate = DNA(n+1) + diphosphate. Functionally, telomerase is a ribonucleoprotein enzyme essential for the replication of chromosome termini in most eukaryotes. It elongates telomeres. It is a reverse transcriptase that adds simple sequence repeats to chromosome ends by copying a template sequence within the RNA component of the enzyme. This chain is Telomerase reverse transcriptase (TERT), found in Oryza sativa subsp. japonica (Rice).